We begin with the raw amino-acid sequence, 228 residues long: Probable 26S proteasome regulatory subunit p28 (228 aa).

6 ANK repeats span residues 1–30 (MSNY…SLLL), 35–64 (DGRI…NVNL), 71–100 (SGWT…KPDL), 106–135 (QGVT…SVRI), 139–168 (FNQI…SAVN), and 173–203 (QGWT…EYDL).

In terms of assembly, interacts with RPT3.

In terms of biological role, acts as a chaperone during the assembly of the 26S proteasome, specifically of the 19S regulatory complex (RC) and appears to have an overlapping role with RPN14. This chain is Probable 26S proteasome regulatory subunit p28 (NAS6), found in Saccharomyces cerevisiae (strain ATCC 204508 / S288c) (Baker's yeast).